The chain runs to 475 residues: uncharacterized protein (475 aa).

This is an uncharacterized protein from Acheta domesticus (House cricket).